Consider the following 226-residue polypeptide: Cytidylate kinase (226 aa).

10-18 (GPASSGKST) contributes to the ATP binding site.

The protein belongs to the cytidylate kinase family. Type 1 subfamily.

It localises to the cytoplasm. The catalysed reaction is CMP + ATP = CDP + ADP. It carries out the reaction dCMP + ATP = dCDP + ADP. The protein is Cytidylate kinase of Streptococcus equi subsp. equi (strain 4047).